Reading from the N-terminus, the 496-residue chain is Cyclin-dependent kinase 16 (496 aa).

Positions 1–95 (MDRMKKIKRQ…SATSSDEVQS (95 aa)) are disordered. S12 carries the phosphoserine; by BRSK2 modification. S36, S42, S64, S65, S78, S82, and S89 each carry phosphoserine. A compositionally biased stretch (basic and acidic residues) spans 69–78 (IVHEDMKMGS). Residues 83-93 (DQASATSSDEV) are compositionally biased toward polar residues. S95 is modified (phosphoserine; by CDK5). Phosphoserine occurs at positions 110, 119, 138, 146, 153, and 155. The 282-residue stretch at 165–446 (YIKLDKLGEG…AEDARKHPFF (282 aa)) folds into the Protein kinase domain. ATP-binding positions include 171–179 (LGEGTYATV) and K194. T175 is subject to Phosphothreonine. D286 acts as the Proton acceptor in catalysis. T380 carries the post-translational modification Phosphothreonine. Phosphoserine is present on residues S391, S478, and S480.

Belongs to the protein kinase superfamily. CMGC Ser/Thr protein kinase family. CDC2/CDKX subfamily. As to quaternary structure, found in a complex containing CABLES1, CDK17 and TDRD7. Interacts with BRSK2. Identified in a complex with NSF, syntaxin-1, synaptotagmin, SYN1, SYP and CDK5R1. Interacts with YWHAH, YWHAQ and YWHAZ. Interacts with CCNY; this interaction increases the CDK16 kinase activity. Interacts with CCNYL1; this interaction mutually increases the stability of CDK16 and CCNYL1 and increases the kinase activity of CDK16. Interacts with NSF. Phosphorylation of CDK16 is essential for the binding of CCNY, but also essential for the regulation of CDK16 kinase activity. Phosphorylation of CDK16 is essential for the binding of CCNYl1, but also essential for the regulation of CDK16 kinase activity. Ser-146 and Ser-153 are the critical sites for the binding of CCNYL1 and for modulating CDK16 kinase activity. Phosphorylation at Ser-153 inhibits kinase activity. In terms of tissue distribution, highly expressed in testis and brain, and detected at lower levels in heart, skeletal muscle, adipose tissue, lung, spleen and pancreas (at protein level). Ubiquitous with highest levels in testis and brain, with longer form predominant in all tissues except the testis.

The protein localises to the cytoplasm. The protein resides in the cytoplasmic vesicle. It is found in the secretory vesicle. It localises to the cell membrane. Its subcellular location is the synapse. The protein localises to the synaptosome. It catalyses the reaction L-seryl-[protein] + ATP = O-phospho-L-seryl-[protein] + ADP + H(+). The catalysed reaction is L-threonyl-[protein] + ATP = O-phospho-L-threonyl-[protein] + ADP + H(+). In terms of biological role, protein kinase that plays a role in vesicle-mediated transport processes and exocytosis. Can phosphorylate CCNY at 'Ser-336' (in vitro). Plays a role in the regulation of insulin secretion in response to changes in blood glucose levels. Regulates GH1 release by brain neurons. Phosphorylates NSF, and thereby regulates NSF oligomerization. Required for normal spermatogenesis. Regulates neuron differentiation and dendrite development. The sequence is that of Cyclin-dependent kinase 16 (Cdk16) from Mus musculus (Mouse).